The sequence spans 502 residues: ATP synthase subunit alpha (502 aa).

169 to 176 (GDRQTGKT) is a binding site for ATP.

Belongs to the ATPase alpha/beta chains family. F-type ATPases have 2 components, CF(1) - the catalytic core - and CF(0) - the membrane proton channel. CF(1) has five subunits: alpha(3), beta(3), gamma(1), delta(1), epsilon(1). CF(0) has three main subunits: a(1), b(2) and c(9-12). The alpha and beta chains form an alternating ring which encloses part of the gamma chain. CF(1) is attached to CF(0) by a central stalk formed by the gamma and epsilon chains, while a peripheral stalk is formed by the delta and b chains.

It localises to the cell inner membrane. It catalyses the reaction ATP + H2O + 4 H(+)(in) = ADP + phosphate + 5 H(+)(out). In terms of biological role, produces ATP from ADP in the presence of a proton gradient across the membrane. The alpha chain is a regulatory subunit. This chain is ATP synthase subunit alpha, found in Geobacter sp. (strain M21).